The sequence spans 27 residues: Toxin Bcg III 21.00 (27 aa).

It is found in the secreted. It localises to the nematocyst. Functionally, possible voltage-gated potassium channel (Kv) blocker. The chain is Toxin Bcg III 21.00 from Bunodosoma cangicum (Sea anemone).